We begin with the raw amino-acid sequence, 476 residues long: Glycogen synthase (476 aa).

Residue Lys-15 coordinates ADP-alpha-D-glucose.

It belongs to the glycosyltransferase 1 family. Bacterial/plant glycogen synthase subfamily.

The enzyme catalyses [(1-&gt;4)-alpha-D-glucosyl](n) + ADP-alpha-D-glucose = [(1-&gt;4)-alpha-D-glucosyl](n+1) + ADP + H(+). It participates in glycan biosynthesis; glycogen biosynthesis. In terms of biological role, synthesizes alpha-1,4-glucan chains using ADP-glucose. The protein is Glycogen synthase of Bacillus cereus (strain ATCC 10987 / NRS 248).